A 299-amino-acid chain; its full sequence is Protease HtpX homolog (299 aa).

Transmembrane regions (helical) follow at residues I15–F35 and G39–F59. A Zn(2+)-binding site is contributed by H143. The active site involves E144. H147 is a Zn(2+) binding site. 2 helical membrane-spanning segments follow: residues I158–W178 and I198–V218. Zn(2+) is bound at residue E227.

The protein belongs to the peptidase M48B family. Requires Zn(2+) as cofactor.

Its subcellular location is the cell membrane. This chain is Protease HtpX homolog, found in Streptococcus pneumoniae (strain Hungary19A-6).